The following is a 361-amino-acid chain: Pseudouridine-5'-phosphate glycosidase (361 aa).

The active-site Proton donor is glutamate 27. Substrate-binding residues include lysine 88 and valine 108. A Mn(2+)-binding site is contributed by aspartate 140. 142-144 (SAD) serves as a coordination point for substrate. Lysine 161 (nucleophile) is an active-site residue. Residues 306–361 (DRSPTDPAAPDPTAPDPAAPDPTAPDPAAPDSAAPDLAGPDPSAPDPAAVARAHRP) are disordered. Pro residues predominate over residues 312–333 (PAAPDPTAPDPAAPDPTAPDPA). Residues 334–354 (APDSAAPDLAGPDPSAPDPAA) are compositionally biased toward low complexity.

It belongs to the pseudouridine-5'-phosphate glycosidase family. Homotrimer. Mn(2+) is required as a cofactor.

The catalysed reaction is D-ribose 5-phosphate + uracil = psi-UMP + H2O. Catalyzes the reversible cleavage of pseudouridine 5'-phosphate (PsiMP) to ribose 5-phosphate and uracil. Functions biologically in the cleavage direction, as part of a pseudouridine degradation pathway. This Frankia alni (strain DSM 45986 / CECT 9034 / ACN14a) protein is Pseudouridine-5'-phosphate glycosidase.